The chain runs to 89 residues: Small ribosomal subunit protein uS15 (89 aa).

It belongs to the universal ribosomal protein uS15 family. Part of the 30S ribosomal subunit. Forms a bridge to the 50S subunit in the 70S ribosome, contacting the 23S rRNA.

In terms of biological role, one of the primary rRNA binding proteins, it binds directly to 16S rRNA where it helps nucleate assembly of the platform of the 30S subunit by binding and bridging several RNA helices of the 16S rRNA. Its function is as follows. Forms an intersubunit bridge (bridge B4) with the 23S rRNA of the 50S subunit in the ribosome. The chain is Small ribosomal subunit protein uS15 from Pseudomonas fluorescens (strain Pf0-1).